Here is a 524-residue protein sequence, read N- to C-terminus: 2-isopropylmalate synthase (524 aa).

Residues 12–274 enclose the Pyruvate carboxyltransferase domain; that stretch reads VIIFDTTLRD…WNRIETTMLT (263 aa). The Mn(2+) site is built by Asp21, His209, His211, and Asn245. A regulatory domain region spans residues 398–524; it reads KLMSLTVIAG…EDAPTVAVAG (127 aa).

The protein belongs to the alpha-IPM synthase/homocitrate synthase family. LeuA type 1 subfamily. As to quaternary structure, homodimer. The cofactor is Mn(2+).

The protein localises to the cytoplasm. It carries out the reaction 3-methyl-2-oxobutanoate + acetyl-CoA + H2O = (2S)-2-isopropylmalate + CoA + H(+). Its pathway is amino-acid biosynthesis; L-leucine biosynthesis; L-leucine from 3-methyl-2-oxobutanoate: step 1/4. In terms of biological role, catalyzes the condensation of the acetyl group of acetyl-CoA with 3-methyl-2-oxobutanoate (2-ketoisovalerate) to form 3-carboxy-3-hydroxy-4-methylpentanoate (2-isopropylmalate). This is 2-isopropylmalate synthase from Rhodopseudomonas palustris (strain TIE-1).